Here is a 155-residue protein sequence, read N- to C-terminus: Ribosomal RNA large subunit methyltransferase H (155 aa).

S-adenosyl-L-methionine contacts are provided by residues L72, G103, and 122–127; that span reads LSPLTL.

It belongs to the RNA methyltransferase RlmH family. As to quaternary structure, homodimer.

It localises to the cytoplasm. The catalysed reaction is pseudouridine(1915) in 23S rRNA + S-adenosyl-L-methionine = N(3)-methylpseudouridine(1915) in 23S rRNA + S-adenosyl-L-homocysteine + H(+). Functionally, specifically methylates the pseudouridine at position 1915 (m3Psi1915) in 23S rRNA. This Histophilus somni (strain 129Pt) (Haemophilus somnus) protein is Ribosomal RNA large subunit methyltransferase H.